Consider the following 95-residue polypeptide: Small ribosomal subunit protein bS20 (95 aa).

This sequence belongs to the bacterial ribosomal protein bS20 family.

Its function is as follows. Binds directly to 16S ribosomal RNA. The chain is Small ribosomal subunit protein bS20 from Ehrlichia ruminantium (strain Gardel).